The sequence spans 271 residues: ATP synthase subunit a (271 aa).

A run of 5 helical transmembrane segments spans residues 40-60 (TINIDSMFFSVVLGLLFLVLF), 100-120 (LIAPLALTIFVWVFLMNLMDL), 146-166 (DVNVTLSMALGVFILILFYNI), 220-240 (LIFILIAGLLPWWSQWILNVP), and 242-262 (AIFHILIITLQAFIFMVLTIV).

This sequence belongs to the ATPase A chain family. As to quaternary structure, F-type ATPases have 2 components, CF(1) - the catalytic core - and CF(0) - the membrane proton channel. CF(1) has five subunits: alpha(3), beta(3), gamma(1), delta(1), epsilon(1). CF(0) has three main subunits: a(1), b(2) and c(9-12). The alpha and beta chains form an alternating ring which encloses part of the gamma chain. CF(1) is attached to CF(0) by a central stalk formed by the gamma and epsilon chains, while a peripheral stalk is formed by the delta and b chains.

The protein localises to the cell inner membrane. Functionally, key component of the proton channel; it plays a direct role in the translocation of protons across the membrane. The protein is ATP synthase subunit a of Shigella flexneri.